Reading from the N-terminus, the 403-residue chain is Basic leucine zipper 25 (403 aa).

Disordered stretches follow at residues 13–128 (SFWP…APVV) and 156–259 (VKPE…EFDT). A compositionally biased stretch (low complexity) spans 24 to 33 (PGSSSTPSPT). Residues 56 to 69 (LSGSDSSPTTNTIE) are compositionally biased toward polar residues. Composition is skewed to low complexity over residues 115-128 (APSSDPVDSSAPVV) and 161-174 (SSASASNQKQAQGS). Polar residues predominate over residues 175 to 195 (IVAQTSPGASSVRFSPTTSTQ). Residues 212–226 (DSDDDDLDGDADNGD) are compositionally biased toward acidic residues. Ser213 carries the post-translational modification Phosphoserine. Residues 229–292 (DVKRARRMLS…DAAAVDNRIL (64 aa)) enclose the bZIP domain. The interval 231 to 250 (KRARRMLSNRESARRSRRRK) is basic motif. The short motif at 233–240 (ARRMLSNR) is the Nuclear localization signal element. The leucine-zipper stretch occupies residues 264–271 (LRAEHSTL). Over residues 332–345 (NTPSASSSIPPNSN) the composition is skewed to low complexity. Disordered stretches follow at residues 332 to 361 (NTPSASSSIPPNSNHILKPANSSTNTSAGL) and 380 to 403 (EGMQNPFAPDSNLYETLPHWNHKH). A compositionally biased stretch (polar residues) spans 351 to 361 (ANSSTNTSAGL).

It belongs to the bZIP family. Homodimer. Forms a heterodimer with BZIP1, BZIP1, BZIP2, BZIP9, BZIP11, BZIP44, BZIP53 and BZIP63. Interacts with ABI3 and forms a complex made of ABI3, BZIP53 and BZIP25. As to expression, expressed in roots, shoots, stems, leaves, stipulae, siliques, seeds, pollen, and flowers.

Its subcellular location is the nucleus. Functionally, transcription factor that binds to the 5'-ACGT-3' box, especially present in G-box-like motif (5'-CCACGTGGCC-3'), ABRE elements, of seed storage protein (SSP) encoding gene promoters (e.g. At2S and CRU3) and promotes their expression in seeds when in complex with ABI3 and BZIP53. The sequence is that of Basic leucine zipper 25 (BZIP25) from Arabidopsis thaliana (Mouse-ear cress).